Reading from the N-terminus, the 185-residue chain is Elongation factor P (185 aa).

The protein belongs to the elongation factor P family.

It is found in the cytoplasm. The protein operates within protein biosynthesis; polypeptide chain elongation. Its function is as follows. Involved in peptide bond synthesis. Stimulates efficient translation and peptide-bond synthesis on native or reconstituted 70S ribosomes in vitro. Probably functions indirectly by altering the affinity of the ribosome for aminoacyl-tRNA, thus increasing their reactivity as acceptors for peptidyl transferase. The chain is Elongation factor P from Paraburkholderia phytofirmans (strain DSM 17436 / LMG 22146 / PsJN) (Burkholderia phytofirmans).